A 508-amino-acid polypeptide reads, in one-letter code: Photosystem II CP47 reaction center protein (508 aa).

6 helical membrane passes run 21–36 (SVHI…WAGS), 101–115 (IVFS…IWHW), 140–156 (GIHL…FGVF), 203–218 (IAAG…FHLS), 237–252 (VLSS…AFVV), and 457–472 (SFAL…HGAR).

The protein belongs to the PsbB/PsbC family. PsbB subfamily. In terms of assembly, PSII is composed of 1 copy each of membrane proteins PsbA, PsbB, PsbC, PsbD, PsbE, PsbF, PsbH, PsbI, PsbJ, PsbK, PsbL, PsbM, PsbT, PsbX, PsbY, PsbZ, Psb30/Ycf12, at least 3 peripheral proteins of the oxygen-evolving complex and a large number of cofactors. It forms dimeric complexes. The cofactor is Binds multiple chlorophylls. PSII binds additional chlorophylls, carotenoids and specific lipids..

The protein resides in the plastid. It localises to the chloroplast thylakoid membrane. In terms of biological role, one of the components of the core complex of photosystem II (PSII). It binds chlorophyll and helps catalyze the primary light-induced photochemical processes of PSII. PSII is a light-driven water:plastoquinone oxidoreductase, using light energy to abstract electrons from H(2)O, generating O(2) and a proton gradient subsequently used for ATP formation. This chain is Photosystem II CP47 reaction center protein, found in Jasminum nudiflorum (Winter jasmine).